The chain runs to 777 residues: Cullin-3 (777 aa).

A disordered region spans residues 568–596 (YPPPKASMSNEENGPGPSSSGESMKERKP). The segment covering 576–589 (SNEENGPGPSSSGE) has biased composition (low complexity). Positions 707–769 (DRKLEVEAAI…REYLARDEHD (63 aa)) constitute a Cullin neddylation domain. Lysine 721 is covalently cross-linked (Glycyl lysine isopeptide (Lys-Gly) (interchain with G-Cter in NEDD8)).

It belongs to the cullin family. Probable component of multiple cullin-RING-based BCB (BTB-CUL3-BTB) E3 ubiquitin-protein ligase complexes formed by cul-3, rbx-1 and a variable BTB domain-containing protein acting as both, adapter to cullin and substrate recognition component. Interacts with bath-15, bath-40, bath-41, bath-42, C17F4.8, tag-303, D2045.8, F57C2.1, ZC239.15 and B0281.5. Interacts with mel-26 (via BTB domain). Interacts with dcn-1. In terms of processing, neddylated. Deneddylated via its interaction with the COP9 signalosome (CSN) complex.

The protein localises to the cytoplasm. Its subcellular location is the nucleus. Its pathway is protein modification; protein ubiquitination. Functionally, probable core component of multiple cullin-RING-based BCB (BTB-CUL3-BTB) E3 ubiquitin-protein ligase complexes which mediate the ubiquitination and subsequent proteasomal degradation of target proteins. Probably acts as a scaffold protein which may contribute to catalysis through positioning of the substrate and the ubiquitin-conjugating enzyme. Required to target mei-3/katanin for degradation at the meiosis to mitosis transition via its neddylation and deneddylation. Functions in ubiquitin-mediated degradation of CKIs to target cki-1 for degradation. Regulates microtubule stability in the early embryo. In body wall muscles, involved in the organization of myosin thick filaments, likely by regulating the degradation of microtubule severing protein mei-1 downstream of unc-89. Together with spop-1, may promote the ubiquitination and proteasomal degradation of target bromodomain-containing proteins such as bet-1. The polypeptide is Cullin-3 (Caenorhabditis elegans).